Consider the following 322-residue polypeptide: Acetylglutamate kinase (322 aa).

Residues 89–90, arginine 111, and asparagine 217 each bind substrate; that span reads GG.

This sequence belongs to the acetylglutamate kinase family. ArgB subfamily.

The protein resides in the cytoplasm. The enzyme catalyses N-acetyl-L-glutamate + ATP = N-acetyl-L-glutamyl 5-phosphate + ADP. Its pathway is amino-acid biosynthesis; L-arginine biosynthesis; N(2)-acetyl-L-ornithine from L-glutamate: step 2/4. In terms of biological role, catalyzes the ATP-dependent phosphorylation of N-acetyl-L-glutamate. This is Acetylglutamate kinase from Ehrlichia ruminantium (strain Welgevonden).